The following is a 295-amino-acid chain: F-box only protein 6 (295 aa).

The 48-residue stretch at 1-48 (MVHINELPENILLELFIHIPAPQLLRNCRLVCRLWRDLIDVVSLWKRK) folds into the F-box domain. The region spanning 69-250 (FYILCSLQRN…VTNSSIIISH (182 aa)) is the FBA domain. Ser-249 and Ser-276 each carry phosphoserine. At Thr-280 the chain carries Phosphothreonine.

Interacts with CHEK1 and CUL1. Part of a SCF (SKP1-cullin-F-box) protein ligase complex. Interacts with VCP. In terms of tissue distribution, present in liver and kidney (at protein level). Widely expressed.

It is found in the cytoplasm. Its pathway is protein modification; protein ubiquitination. Its function is as follows. Substrate-recognition component of some SCF (SKP1-CUL1-F-box protein)-type E3 ubiquitin ligase complexes. Involved in DNA damage response by specifically recognizing activated CHEK1 (phosphorylated on 'Ser-345'), promoting its ubiquitination and degradation. Ubiquitination of CHEK1 is required to ensure that activated CHEK1 does not accumulate as cells progress through S phase, or when replication forks encounter transient impediments during normal DNA replication. Involved in endoplasmic reticulum-associated degradation pathway (ERAD) for misfolded lumenal proteins by recognizing and binding sugar chains on unfolded glycoproteins that are retrotranslocated into the cytosol and promoting their ubiquitination and subsequent degradation. Able to recognize and bind denatured glycoproteins, which are modified with not only high-mannose but also complex-type oligosaccharides. Also recognizes sulfated glycans. The chain is F-box only protein 6 (Fbxo6) from Mus musculus (Mouse).